The primary structure comprises 317 residues: Glutathione synthetase (317 aa).

Residues 126–311 (KFFATQFTQC…IGDKLMDAIA (186 aa)) form the ATP-grasp domain. Position 152 to 208 (152 to 208 (AAEHRDIILKPLDGMGGSSIFRHREGDPNLSVILETLTQHGSQQIMAQRYLPEIKDG)) interacts with ATP. 2 residues coordinate Mg(2+): Glu282 and Asn284.

This sequence belongs to the prokaryotic GSH synthase family. The cofactor is Mg(2+). Requires Mn(2+) as cofactor.

The catalysed reaction is gamma-L-glutamyl-L-cysteine + glycine + ATP = glutathione + ADP + phosphate + H(+). It participates in sulfur metabolism; glutathione biosynthesis; glutathione from L-cysteine and L-glutamate: step 2/2. The protein is Glutathione synthetase of Pseudomonas aeruginosa (strain ATCC 15692 / DSM 22644 / CIP 104116 / JCM 14847 / LMG 12228 / 1C / PRS 101 / PAO1).